The primary structure comprises 97 residues: Aspartyl/glutamyl-tRNA(Asn/Gln) amidotransferase subunit C (97 aa).

Belongs to the GatC family. Heterotrimer of A, B and C subunits.

The catalysed reaction is L-glutamyl-tRNA(Gln) + L-glutamine + ATP + H2O = L-glutaminyl-tRNA(Gln) + L-glutamate + ADP + phosphate + H(+). It carries out the reaction L-aspartyl-tRNA(Asn) + L-glutamine + ATP + H2O = L-asparaginyl-tRNA(Asn) + L-glutamate + ADP + phosphate + 2 H(+). Functionally, allows the formation of correctly charged Asn-tRNA(Asn) or Gln-tRNA(Gln) through the transamidation of misacylated Asp-tRNA(Asn) or Glu-tRNA(Gln) in organisms which lack either or both of asparaginyl-tRNA or glutaminyl-tRNA synthetases. The reaction takes place in the presence of glutamine and ATP through an activated phospho-Asp-tRNA(Asn) or phospho-Glu-tRNA(Gln). This is Aspartyl/glutamyl-tRNA(Asn/Gln) amidotransferase subunit C from Listeria monocytogenes serotype 4b (strain CLIP80459).